A 712-amino-acid chain; its full sequence is Autophagy-related protein 13 (712 aa).

2 disordered regions span residues 388 to 443 (AGST…ETPP) and 568 to 611 (GSVG…DDDE). A compositionally biased stretch (low complexity) spans 402–415 (SSVGSGSKYSSSFG). Residues 412–420 (SSFGRIRRH) are ATG17-binding. Positions 424 to 439 (RRSESIDRTAKPRKSN) are enriched in basic and acidic residues. Residues 441–500 (TPPEDLLEFVKLLEDKKELNMKPSTILPQQDISSSLIKFQSMKPNNDTLSDNLSMSMSID) form an ATG1-binding region. Acidic residues predominate over residues 576–585 (TNEDSKEDED).

This sequence belongs to the ATG13 family. Fungi subfamily. In terms of assembly, hypophosphorylated form interacts with ATG1 to form the ATG1-ATG13 kinase complex. The ATG1-ATG13 complex interacts with the ATG17-ATG29-ATG31 complex through direct interaction with ATG17. Interacts with VAC8. Post-translationally, hyperphosphorylated under nutrient-rich conditions. Starvation and TOR inactivation results in ATG13 partial dephosphorylation leading to ATG1-binding. Dephosphorylation induces ATG17-binding.

It is found in the cytoplasm. The protein localises to the preautophagosomal structure. In terms of biological role, activates the ATG1 kinase in a nutritional condition dependent manner through the TOR pathway, leading to autophagy. Involved in ATG9 and ATG23 cycling through the pre-autophagosomal structure. Also involved in cytoplasm to vacuole transport (Cvt) and more specifically in Cvt vesicle formation. Seems to play a role in the switching machinery regulating the conversion between the Cvt pathway and autophagy. Finally, ATG13 is also required for glycogen storage during stationary phase. The polypeptide is Autophagy-related protein 13 (Kluyveromyces marxianus (strain DMKU3-1042 / BCC 29191 / NBRC 104275) (Yeast)).